Consider the following 76-residue polypeptide: FMRFamide-related neuropeptides (76 aa).

An N-terminal signal peptide occupies residues 1-27 (MCVQTRMLVAVAVVLVVLAVLSDPVSA). At Phe39 the chain carries Phenylalanine amide.

This sequence belongs to the FARP (FMRFamide related peptide) family. As to expression, olfactory lobe and accessory lobe, olfactory globular tract, olfactory lobe cells (at protein level). Widely distributed throughout nervous system.

Its subcellular location is the secreted. GYRKPPFNGSIF-amide may be involved in olfaction and contraction of hindgut. This is FMRFamide-related neuropeptides from Procambarus clarkii (Red swamp crayfish).